Here is a 304-residue protein sequence, read N- to C-terminus: Ribosomal RNA small subunit methyltransferase H (304 aa).

S-adenosyl-L-methionine-binding positions include 47 to 49 (GGH), aspartate 66, phenylalanine 93, aspartate 108, and glutamine 115.

Belongs to the methyltransferase superfamily. RsmH family.

The protein localises to the cytoplasm. The enzyme catalyses cytidine(1402) in 16S rRNA + S-adenosyl-L-methionine = N(4)-methylcytidine(1402) in 16S rRNA + S-adenosyl-L-homocysteine + H(+). In terms of biological role, specifically methylates the N4 position of cytidine in position 1402 (C1402) of 16S rRNA. This Prochlorococcus marinus (strain NATL2A) protein is Ribosomal RNA small subunit methyltransferase H.